A 100-amino-acid polypeptide reads, in one-letter code: Large ribosomal subunit protein uL23 (100 aa).

The protein belongs to the universal ribosomal protein uL23 family. In terms of assembly, part of the 50S ribosomal subunit. Contacts protein L29, and trigger factor when it is bound to the ribosome.

Its function is as follows. One of the early assembly proteins it binds 23S rRNA. One of the proteins that surrounds the polypeptide exit tunnel on the outside of the ribosome. Forms the main docking site for trigger factor binding to the ribosome. This is Large ribosomal subunit protein uL23 from Thermotoga neapolitana (strain ATCC 49049 / DSM 4359 / NBRC 107923 / NS-E).